A 535-amino-acid chain; its full sequence is Sucrose transport protein SUT5 (535 aa).

The Cytoplasmic portion of the chain corresponds to 1 to 53; the sequence is MEEGRRGDREGKSAAGWTALSTTKTTLEEKRRLQANGSVGGDAGTSGFRRIVR. The chain crosses the membrane as a helical span at residues 54–74; the sequence is LFFACMVAGGIQYGWALQLSL. Residues 75–87 are Extracellular-facing; it reads LSPYSQTLGISHS. The chain crosses the membrane as a helical span at residues 88-108; that stretch reads YVSLTWICGPIAGFVVQPIVG. Topologically, residues 109–122 are cytoplasmic; sequence YYSDRCTMKMGRRR. A helical transmembrane segment spans residues 123–143; the sequence is PFILVGCLIICISVMIIGFSA. The Extracellular portion of the chain corresponds to 144–163; the sequence is DIGRHLGDTKEHCSTYTGPR. The chain crosses the membrane as a helical span at residues 164–184; that stretch reads WSAAMVYIVGFWFLDFANNTV. At 185–203 the chain is on the cytoplasmic side; that stretch reads QGPARAMMADLSAGHHGPN. The helical transmembrane segment at 204 to 224 threads the bilayer; it reads VGQSIFSLWMAIGSVLGYLSG. Topologically, residues 225–249 are extracellular; it reads ANGKWHEWFPWLKTAACCDACANLK. Residues 250-270 traverse the membrane as a helical segment; that stretch reads GAFFTAVLLIVVSMTVTMYLA. Residues 271-302 are Cytoplasmic-facing; that stretch reads DEMPLDKQDVDTSGGGGCAVFVDLFKSLRNLP. Residues 303 to 323 traverse the membrane as a helical segment; the sequence is PAMFKVLAVTAVTWLSWFPFI. Over 324-354 the chain is Extracellular; it reads QYNTDWMGREIYHGEPQGTAAKADVYDAGVR. The chain crosses the membrane as a helical span at residues 355–375; it reads EGAMGLLFCSVALGVTSFVIP. The Cytoplasmic portion of the chain corresponds to 376 to 384; sequence KLCRRLTSK. The helical transmembrane segment at 385–405 threads the bilayer; that stretch reads VVWSISNFLVFALMAVMVAVG. The Extracellular segment spans residues 406-429; it reads MVSMRGYRPSLAAGLTGPDPTLKA. Residues 430 to 450 traverse the membrane as a helical segment; the sequence is VALVVFALIGIPQAVLFSVPW. Topologically, residues 451-465 are cytoplasmic; sequence AVASEVTAEEGGGQG. Residues 466–486 traverse the membrane as a helical segment; that stretch reads LAIGVLNIAIVVPQLVIALTA. Topologically, residues 487-498 are extracellular; sequence GPIDGAFNKGNT. Residues 499–519 form a helical membrane-spanning segment; the sequence is PAFGIGGAFAFICGVLALIWL. The Cytoplasmic segment spans residues 520–535; it reads PKTRGVSNAAVVAGGH.

It belongs to the glycoside-pentoside-hexuronide (GPH) cation symporter transporter (TC 2.A.2.4) family. Homodimer. Widely expressed. Highest expression in sink leaves and lowest in germinating seeds.

It localises to the cell membrane. The protein operates within glycan biosynthesis; sucrose metabolism. Responsible for the transport of sucrose into the cell, with the concomitant uptake of protons (symport system). Can also transport other glucosides such as maltose, arbutin, salicin, helicin, alpha-phenylglucoside and beta-phenylglucoside. The chain is Sucrose transport protein SUT5 (SUT5) from Oryza sativa subsp. japonica (Rice).